The primary structure comprises 215 residues: MNLVMLILALWAPVAGSMPELSLTLFDEPPPLVETEPLPPLSDVSEYRVEYSEARCVLRSGGRLEALWTLRGNLSVPTPTPRVYYQTLEGYADRVPTPVEDVSESLVAKRYWLRDYRVPQRTKLVLFYFSPCHQCQTYYVECEPRCLVPWVPLWSSLEDIERLLFEDRRLMAYYALTIKSAQYTLMMVAVIQVFWGLYVKGWLHRHFPWMFSDQW.

The partially cleaved signal peptide spans 1-17 (MNLVMLILALWAPVAGS). The Lumenal segment spans residues 18-182 (MPELSLTLFD…YYALTIKSAQ (165 aa)). One can recognise an Ig-like H-type domain in the interval 47–146 (YRVEYSEARC…TYYVECEPRC (100 aa)). A disulfide bridge links cysteine 56 with cysteine 142. N-linked (GlcNAc...) asparagine; by host glycosylation is present at asparagine 73. Residues 183–203 (YTLMMVAVIQVFWGLYVKGWL) form a helical membrane-spanning segment. At 204-215 (HRHFPWMFSDQW) the chain is on the cytoplasmic side.

The protein belongs to the cytomegalovirus US6 family. In terms of assembly, interacts with host TRAM1. N-glycosylated. Post-translationally, a fraction of newly synthesized molecules retain the signal peptide after the N-linked glycan has been attached and translation of the polypeptide has been completed. Delayed cleavage of the signal peptide is determined by the first four residues, as well as by the transmembrane region.

The protein localises to the host endoplasmic reticulum membrane. Its function is as follows. Participates in the inhibition of the host immune response. Redirects newly synthesized major histocompatibility complex (MHC) class I heavy chains via the SEC61 translocon to the cytosol where they undergo proteasome-dependent destruction. In consequence, infected cells are masked for immune recognition by cytotoxic T-lymphocytes. This chain is Unique short US11 glycoprotein (US11), found in Human cytomegalovirus (strain AD169) (HHV-5).